The sequence spans 198 residues: Small ribosomal subunit protein uS7 (198 aa).

It belongs to the universal ribosomal protein uS7 family. As to quaternary structure, part of the 30S ribosomal subunit.

One of the primary rRNA binding proteins, it binds directly to 16S rRNA where it nucleates assembly of the head domain of the 30S subunit. Is located at the subunit interface close to the decoding center. The chain is Small ribosomal subunit protein uS7 from Desulfurococcus mucosus (Desulfurococcus mobilis).